Here is a 506-residue protein sequence, read N- to C-terminus: 2-isopropylmalate synthase (506 aa).

The Pyruvate carboxyltransferase domain maps to 4–266 (ILFMDTTLRD…EPSMTLKEIK (263 aa)). Residues Asp-13, His-201, His-203, and Asn-237 each contribute to the Mn(2+) site. Positions 390-506 (NITQLQVHFV…KLKSFIQLVK (117 aa)) are regulatory domain.

It belongs to the alpha-IPM synthase/homocitrate synthase family. LeuA type 1 subfamily. Homodimer. It depends on Mn(2+) as a cofactor.

It localises to the cytoplasm. It catalyses the reaction 3-methyl-2-oxobutanoate + acetyl-CoA + H2O = (2S)-2-isopropylmalate + CoA + H(+). Its pathway is amino-acid biosynthesis; L-leucine biosynthesis; L-leucine from 3-methyl-2-oxobutanoate: step 1/4. In terms of biological role, catalyzes the condensation of the acetyl group of acetyl-CoA with 3-methyl-2-oxobutanoate (2-ketoisovalerate) to form 3-carboxy-3-hydroxy-4-methylpentanoate (2-isopropylmalate). The protein is 2-isopropylmalate synthase of Bacillus cereus (strain AH820).